Here is a 160-residue protein sequence, read N- to C-terminus: Non-secretory ribonuclease (160 aa).

The first 27 residues, methionine 1–alanine 27, serve as a signal peptide directing secretion. C-linked (Man) tryptophan glycosylation occurs at tryptophan 34. The active-site Proton acceptor is the histidine 42. N-linked (GlcNAc...) asparagine glycosylation is present at asparagine 44. Disulfide bonds link cysteine 50–cysteine 110, cysteine 64–cysteine 122, cysteine 82–cysteine 137, and cysteine 89–cysteine 98. Residue tyrosine 60 is modified to 3'-nitrotyrosine. Lysine 65–threonine 69 contacts substrate. 3 N-linked (GlcNAc...) asparagine glycosylation sites follow: asparagine 92, asparagine 111, and asparagine 138. Histidine 155 (proton donor) is an active-site residue.

Belongs to the pancreatic ribonuclease family. As to quaternary structure, interacts with and forms a tight 1:1 complex with RNH1. Dimerization of two such complexes may occur.

It is found in the lysosome. It localises to the cytoplasmic granule. The enzyme catalyses an [RNA] containing cytidine + H2O = an [RNA]-3'-cytidine-3'-phosphate + a 5'-hydroxy-ribonucleotide-3'-[RNA].. It catalyses the reaction an [RNA] containing uridine + H2O = an [RNA]-3'-uridine-3'-phosphate + a 5'-hydroxy-ribonucleotide-3'-[RNA].. In terms of biological role, this is a non-secretory ribonuclease. It is a pyrimidine specific nuclease with a slight preference for U. Cytotoxin and helminthotoxin. Possesses a wide variety of biological activities. In Papio hamadryas (Hamadryas baboon), this protein is Non-secretory ribonuclease (RNASE2).